A 130-amino-acid polypeptide reads, in one-letter code: Osteocrin (130 aa).

Residues 1–25 form the signal peptide; sequence MLDWRLASTHFILAMIVMLWGSGKA. Residue Arg-129 is modified to Arginine amide.

Belongs to the Osteocrin family. Interacts with NPR3. As to expression, expressed in skeletal muscle and to a much lesser extent in bone, brown adipose tissue, spleen and testis. Not expressed in neurons.

The protein localises to the secreted. Hormone that acts as a ligand for natriuretic peptide receptor NPR3/NPR-C and promotes bone growth and physical endurance in muscle. Acts as a regulator of osteoblast differentiation and bone growth by binding to natriuretic peptide receptor NPR3/NPR-C, thereby preventing binding between NPR3/NPR-C and natriuretic peptides, leading to increase cGMP production. Required to enhance physical endurance: induced following physical exercise in muscle and promotes cGMP production, probably by interacting with NPR3/NPR-C. May act as an autocrine and paracrine factor linked to glucose metabolism in skeletal muscle. The chain is Osteocrin from Mus musculus (Mouse).